A 20-amino-acid chain; its full sequence is Phylloseptin-O1 (20 aa).

G20 carries the glycine amide modification.

In terms of tissue distribution, expressed by the skin glands.

It localises to the secreted. In terms of biological role, has antiprotozoal activity against T.cruzi. This is Phylloseptin-O1 (psn4) from Pithecopus oreades (Orange-legged leaf frog).